The primary structure comprises 36 residues: Egg-laying hormone (36 aa).

A Lysine amide modification is found at lysine 36.

This sequence belongs to the molluscan ELH family. As to expression, bag cell neurons.

Its subcellular location is the secreted. Its function is as follows. ELH acts as a neurotransmitter locally, upon neurons of the abdominal ganglion and as a hormone by diffusing into the circulating hemolymph and modulating the activity of other organs. It specifically causes contraction of smooth muscle in the ovotestis and expulsion of the egg string. This is Egg-laying hormone from Aplysia fasciata (Mottled sea hare).